The primary structure comprises 169 residues: Tumor suppressor ARF (169 aa).

The segment at 1–63 (MGRRFLVTVR…RRGPHRNPGP (63 aa)) is interaction with CDK5RAP3 and MDM2. Residues 54 to 73 (RRGPHRNPGPGDDDGQRSRS) form a disordered region.

Does not interact with cyclins, CDK1, CDK2, CDK4, CDK5 or CDK6. Interacts with COMMD1. Binds to BCL6, E2F1, HUWE1, MDM2, MYC, NPM1/B23, TOP1/TOPOI and UBE2I/UBC9. Interacts with TBRG1. Interacts with CDKN2AIP and E4F1. Interacts with CDK5RAP3 and MDM2; form a ternary complex involved in regulation of p53/TP53. Interacts with NOP53; the interaction is direct and promotes ARF nucleoplasmic relocalization and ubiquitin-mediated proteasomal degradation. Interacts with TTF1 (via the N-terminal region (NRD) and a C-terminal region); the interaction is direct and inhibits the nucleolar localization of TTF1. As to quaternary structure, interacts with C1QBP. Post-translationally, ubiquitinated in normal cells by TRIP12 via the ubiquitin fusion degradation (UFD) pathway, a process that mediates ubiquitination at the N-terminus, regardless of the absence of lysine residues. Ubiquitination leads to its proteasomal degradation. In cancer cells, however, TRIP12 is located in a different cell compartment, preventing ubiquitination and degradation.

It is found in the nucleus. The protein localises to the nucleolus. It localises to the nucleoplasm. Its subcellular location is the mitochondrion. Capable of inducing cell cycle arrest in G1 and G2 phases. Acts as a tumor suppressor. Binds to MDM2 and blocks its nucleocytoplasmic shuttling by sequestering it in the nucleolus. This inhibits the oncogenic action of MDM2 by blocking MDM2-induced degradation of p53 and enhancing p53-dependent transactivation and apoptosis. Also induces G2 arrest and apoptosis in a p53-independent manner by preventing the activation of cyclin B1/CDC2 complexes. Binds to BCL6 and down-regulates BCL6-induced transcriptional repression. Binds to E2F1 and MYC and blocks their transcriptional activator activity but has no effect on MYC transcriptional repression. Binds to TOP1/TOPOI and stimulates its activity. This complex binds to rRNA gene promoters and may play a role in rRNA transcription and/or maturation. Interacts with NPM1/B23 and promotes its polyubiquitination and degradation, thus inhibiting rRNA processing. Plays a role in inhibiting ribosome biogenesis, perhaps by binding to the nucleolar localization sequence of transcription termination factor TTF1, and thereby preventing nucleolar localization of TTF1. Interacts with COMMD1 and promotes its 'Lys63'-linked polyubiquitination. Interacts with UBE2I/UBC9 and enhances sumoylation of a number of its binding partners including MDM2 and E2F1. Binds to HUWE1 and represses its ubiquitin ligase activity. May play a role in controlling cell proliferation and apoptosis during mammary gland development. Functionally, may be involved in regulation of autophagy and caspase-independent cell death; the short-lived mitochondrial isoform is stabilized by C1QBP. The sequence is that of Tumor suppressor ARF from Mus musculus (Mouse).